The following is a 570-amino-acid chain: Sulfite reductase [NADPH] hemoprotein beta-component (570 aa).

[4Fe-4S] cluster is bound by residues cysteine 434, cysteine 440, cysteine 479, and cysteine 483. Siroheme is bound at residue cysteine 483.

The protein belongs to the nitrite and sulfite reductase 4Fe-4S domain family. Alpha(8)-beta(8). The alpha component is a flavoprotein, the beta component is a hemoprotein. Siroheme serves as cofactor. Requires [4Fe-4S] cluster as cofactor.

The catalysed reaction is hydrogen sulfide + 3 NADP(+) + 3 H2O = sulfite + 3 NADPH + 4 H(+). It functions in the pathway sulfur metabolism; hydrogen sulfide biosynthesis; hydrogen sulfide from sulfite (NADPH route): step 1/1. Its function is as follows. Component of the sulfite reductase complex that catalyzes the 6-electron reduction of sulfite to sulfide. This is one of several activities required for the biosynthesis of L-cysteine from sulfate. This is Sulfite reductase [NADPH] hemoprotein beta-component from Salmonella arizonae (strain ATCC BAA-731 / CDC346-86 / RSK2980).